Consider the following 117-residue polypeptide: uncharacterized protein (117 aa).

An N-terminal signal peptide occupies residues 1–18 (MKFFWVSSLLGLLGLSTA). Residue N86 is glycosylated (N-linked (GlcNAc...) asparagine).

This is an uncharacterized protein from Schizosaccharomyces pombe (strain 972 / ATCC 24843) (Fission yeast).